A 275-amino-acid polypeptide reads, in one-letter code: Membrane protein insertase YidC (275 aa).

The N-terminal stretch at 1 to 22 is a signal peptide; that stretch reads MKKYKRLLLMAGLVTLVFVLSA. Cys-23 carries N-palmitoyl cysteine lipidation. Cys-23 is lipidated: S-diacylglycerol cysteine. 4 helical membrane passes run 53 to 73, 127 to 147, 169 to 189, and 206 to 226; these read LGGSVGIGIILFTLVIRIILL, YIGCLPLLVQLPIMMALYQAI, YLILPILAAVFTFASTYLSSM, and PAMIFFMGISLASSLSLYWVV. Over residues 249–266 the composition is skewed to basic and acidic residues; that stretch reads EEAARQAKARERALERAK. The disordered stretch occupies residues 249-275; the sequence is EEAARQAKARERALERAKSPKKKGKKK.

Belongs to the OXA1/ALB3/YidC family. Type 2 subfamily.

It is found in the cell membrane. Functionally, required for the insertion and/or proper folding and/or complex formation of integral membrane proteins into the membrane. Involved in integration of membrane proteins that insert both dependently and independently of the Sec translocase complex, as well as at least some lipoproteins. This is Membrane protein insertase YidC from Enterococcus faecalis (strain ATCC 700802 / V583).